The following is a 364-amino-acid chain: DNA replication and repair protein RecF (364 aa).

Position 30 to 37 (30 to 37 (GENGSGKT)) interacts with ATP.

Belongs to the RecF family.

The protein resides in the cytoplasm. Functionally, the RecF protein is involved in DNA metabolism; it is required for DNA replication and normal SOS inducibility. RecF binds preferentially to single-stranded, linear DNA. It also seems to bind ATP. This Xylella fastidiosa (strain M23) protein is DNA replication and repair protein RecF.